A 313-amino-acid polypeptide reads, in one-letter code: Porphobilinogen deaminase (313 aa).

Cysteine 242 bears the S-(dipyrrolylmethanemethyl)cysteine mark.

This sequence belongs to the HMBS family. As to quaternary structure, monomer. Dipyrromethane serves as cofactor.

It carries out the reaction 4 porphobilinogen + H2O = hydroxymethylbilane + 4 NH4(+). It functions in the pathway porphyrin-containing compound metabolism; protoporphyrin-IX biosynthesis; coproporphyrinogen-III from 5-aminolevulinate: step 2/4. Its function is as follows. Tetrapolymerization of the monopyrrole PBG into the hydroxymethylbilane pre-uroporphyrinogen in several discrete steps. This Pseudomonas fluorescens (strain SBW25) protein is Porphobilinogen deaminase.